Reading from the N-terminus, the 484-residue chain is Poly(A) RNA polymerase GLD2 (484 aa).

Phosphoserine occurs at positions 62 and 69. Residues Lys76 to Arg92 carry the Nuclear localization signal motif. Position 95 is a phosphoserine (Ser95). Mg(2+)-binding residues include Asp213 and Asp215. The PAP-associated domain maps to Ser386–Asn440.

Belongs to the DNA polymerase type-B-like family. GLD2 subfamily. Interacts with CPEB1, CPEB2, CPSF1 and PABPC1. Interacts with QKI isoform QKI7; promoting recruitment to miRNA miR-122 and miR-122 stabilization. Requires Mg(2+) as cofactor. The cofactor is Mn(2+). Ubiquitous. In brain, it is highly expressed in the cerebral cortex, cerebellum, hippocampus and olfactory bulb.

It localises to the cytoplasm. It is found in the nucleus. It carries out the reaction RNA(n) + ATP = RNA(n)-3'-adenine ribonucleotide + diphosphate. Cytoplasmic poly(A) RNA polymerase that adds successive AMP monomers to the 3'-end of specific RNAs, forming a poly(A) tail. In contrast to the canonical nuclear poly(A) RNA polymerase, it only adds poly(A) to selected cytoplasmic mRNAs. Does not play a role in replication-dependent histone mRNA degradation. Adds a single nucleotide to the 3' end of specific miRNAs, monoadenylation stabilizes and prolongs the activity of some but not all miRNAs. This Mus musculus (Mouse) protein is Poly(A) RNA polymerase GLD2 (Tent2).